The primary structure comprises 299 residues: ATP phosphoribosyltransferase (299 aa).

Belongs to the ATP phosphoribosyltransferase family. Long subfamily. Equilibrium between an active dimeric form, an inactive hexameric form and higher aggregates. Interconversion between the various forms is largely reversible and is influenced by the natural substrates and inhibitors of the enzyme. It depends on Mg(2+) as a cofactor.

The protein resides in the cytoplasm. It catalyses the reaction 1-(5-phospho-beta-D-ribosyl)-ATP + diphosphate = 5-phospho-alpha-D-ribose 1-diphosphate + ATP. It participates in amino-acid biosynthesis; L-histidine biosynthesis; L-histidine from 5-phospho-alpha-D-ribose 1-diphosphate: step 1/9. With respect to regulation, feedback inhibited by histidine. Catalyzes the condensation of ATP and 5-phosphoribose 1-diphosphate to form N'-(5'-phosphoribosyl)-ATP (PR-ATP). Has a crucial role in the pathway because the rate of histidine biosynthesis seems to be controlled primarily by regulation of HisG enzymatic activity. The polypeptide is ATP phosphoribosyltransferase (Proteus mirabilis (strain HI4320)).